A 141-amino-acid chain; its full sequence is uncharacterized protein (141 aa).

A compositionally biased stretch (low complexity) spans 1-39; sequence MNNNNNNNNNNNNNNNNNNNNNNNNNSYDSNHSSSSYTS. Residues 1–48 are disordered; sequence MNNNNNNNNNNNNNNNNNNNNNNNNNSYDSNHSSSSYTSENQNREQQF. A helical transmembrane segment spans residues 109–129; that stretch reads FFCKIILVFICLVAIYSLVVI.

It localises to the membrane. This is an uncharacterized protein from Dictyostelium discoideum (Social amoeba).